Here is a 433-residue protein sequence, read N- to C-terminus: 3-phosphoshikimate 1-carboxyvinyltransferase (433 aa).

Residues Lys-23, Ser-24, and Arg-28 each coordinate 3-phosphoshikimate. Position 23 (Lys-23) interacts with phosphoenolpyruvate. Gly-95 and Arg-123 together coordinate phosphoenolpyruvate. The 3-phosphoshikimate site is built by Ser-170, Ser-171, Gln-172, Ser-198, Asp-317, and Lys-344. Phosphoenolpyruvate is bound at residue Gln-172. The active-site Proton acceptor is Asp-317. Positions 348, 391, and 416 each coordinate phosphoenolpyruvate.

It belongs to the EPSP synthase family. As to quaternary structure, monomer.

The protein localises to the cytoplasm. The enzyme catalyses 3-phosphoshikimate + phosphoenolpyruvate = 5-O-(1-carboxyvinyl)-3-phosphoshikimate + phosphate. Its pathway is metabolic intermediate biosynthesis; chorismate biosynthesis; chorismate from D-erythrose 4-phosphate and phosphoenolpyruvate: step 6/7. Functionally, catalyzes the transfer of the enolpyruvyl moiety of phosphoenolpyruvate (PEP) to the 5-hydroxyl of shikimate-3-phosphate (S3P) to produce enolpyruvyl shikimate-3-phosphate and inorganic phosphate. The polypeptide is 3-phosphoshikimate 1-carboxyvinyltransferase (Neisseria meningitidis serogroup C / serotype 2a (strain ATCC 700532 / DSM 15464 / FAM18)).